The sequence spans 379 residues: Armadillo repeat-containing X-linked protein 3 (379 aa).

At 1–6 (MGYARK) the chain is on the mitochondrial intermembrane side. Mitochondrion outer membrane (MOM)-targeting sequence stretches follow at residues 1-6 (MGYARK) and 26-37 (RLTRGRKQNKEK). Residues 7-29 (VGWVTAGLVIGAGACYCIYRLTR) form a helical; Signal-anchor membrane-spanning segment. Topologically, residues 30–379 (GRKQNKEKMA…TERMFPKSQE (350 aa)) are cytoplasmic. A disordered region spans residues 34-69 (NKEKMAEGGPGDVEDAGDCSGARYNDWSDDDDDSNE). Residues Ser-61, Ser-67, and Ser-72 each carry the phosphoserine modification. A nuclear localization signal region spans residues 89–98 (RARARARARA). A Phosphoserine modification is found at Ser-110. ARM repeat units lie at residues 111–151 (PNSD…NNAA), 153–192 (AFNR…NLSV), and 233–272 (VTNE…NLAE).

This sequence belongs to the eutherian X-chromosome-specific Armcx family. Interacts (via ARM domain) with MIRO1, MIRO2 and TRAK2. The interaction with Miro is calcium-dependent. Interacts with Sox10.

Its subcellular location is the mitochondrion outer membrane. It localises to the cytoplasm. It is found in the nucleus. Its function is as follows. Regulates mitochondrial aggregation and transport in axons in living neurons. May link mitochondria to the Trak2-kinesin motor complex via its interaction with Miro and Trak2. Mitochondrial distribution and dynamics is regulated through Armcx3 protein degradation, which is promoted by PCK and negatively regulated by Wnt1. Enhances the Sox10-mediated transactivation of the neuronal acetylcholine receptor subunit alpha-3 and beta-4 subunit gene promoters. This chain is Armadillo repeat-containing X-linked protein 3 (Armcx3), found in Rattus norvegicus (Rat).